Consider the following 62-residue polypeptide: Photosystem II reaction center protein Z (62 aa).

2 helical membrane passes run 8-28 (AVFA…VVFA) and 41-61 (FSGT…NSLI).

It belongs to the PsbZ family. As to quaternary structure, PSII is composed of 1 copy each of membrane proteins PsbA, PsbB, PsbC, PsbD, PsbE, PsbF, PsbH, PsbI, PsbJ, PsbK, PsbL, PsbM, PsbT, PsbY, PsbZ, Psb30/Ycf12, at least 3 peripheral proteins of the oxygen-evolving complex and a large number of cofactors. It forms dimeric complexes.

It localises to the plastid. Its subcellular location is the chloroplast thylakoid membrane. Its function is as follows. May control the interaction of photosystem II (PSII) cores with the light-harvesting antenna, regulates electron flow through the 2 photosystem reaction centers. PSII is a light-driven water plastoquinone oxidoreductase, using light energy to abstract electrons from H(2)O, generating a proton gradient subsequently used for ATP formation. The polypeptide is Photosystem II reaction center protein Z (Lotus japonicus (Lotus corniculatus var. japonicus)).